An 878-amino-acid chain; its full sequence is E3 ubiquitin-protein ligase BRE1-like 1 (878 aa).

Residues methionine 1–glutamate 21 are disordered. 4 coiled-coil regions span residues glutamine 48 to lysine 76, glutamine 200 to glutamine 261, serine 293 to glutamine 382, and leucine 537 to serine 624. The RING-type zinc-finger motif lies at cysteine 826–serine 865.

It belongs to the BRE1 family. In terms of assembly, may act as a tetramer consisting of two copies of HUB1 and two copies of HUB2. Interacts with MED21. In terms of tissue distribution, ubiquitously expressed.

The protein resides in the nucleus. It catalyses the reaction S-ubiquitinyl-[E2 ubiquitin-conjugating enzyme]-L-cysteine + [acceptor protein]-L-lysine = [E2 ubiquitin-conjugating enzyme]-L-cysteine + N(6)-ubiquitinyl-[acceptor protein]-L-lysine.. The protein operates within protein modification; protein ubiquitination. In terms of biological role, E3 ubiquitin-protein ligase that monoubiquitinates H2B to form H2BK143ub1. H2BK143ub1 gives a specific tag for epigenetic transcriptional activation and is also prerequisite for H3K4me and maybe H3K79me. It thereby plays a central role in histone code and gene regulation. Forms a ubiquitin ligase complex in cooperation with the E2 enzyme UBC2/RAD6. Required for the regulation of flowering time and defense against necrotrophic fungal pathogens. Involved in the control of seed dormancy and germination. The sequence is that of E3 ubiquitin-protein ligase BRE1-like 1 (HUB1) from Arabidopsis thaliana (Mouse-ear cress).